Consider the following 261-residue polypeptide: Kallikrein 1-related peptidase b16 (261 aa).

An N-terminal signal peptide occupies residues 1–18; that stretch reads MWFLILFLALSLGGIDAA. Residues 19-24 constitute a propeptide, activation peptide; the sequence is PPVQSR. The 234-residue stretch at 25-258 folds into the Peptidase S1 domain; it reads IVGGFKCEKN…FNSWIKDTMM (234 aa). 5 disulfides stabilise this stretch: Cys31/Cys173, Cys50/Cys66, Cys152/Cys219, Cys184/Cys198, and Cys209/Cys234. The active-site Charge relay system is His65. Asn102 carries N-linked (GlcNAc...) asparagine glycosylation. The active-site Charge relay system is Asp120. The active-site Charge relay system is the Ser213.

This sequence belongs to the peptidase S1 family. Kallikrein subfamily.

It carries out the reaction Cleavage of the Leu-|-Leu bond in synthetic tetradecapeptide renin substrate, to produce angiotensin I, but not active on natural angiotensinogen. Also hydrolyzes Bz-Arg-p-nitroanilide.. This Mus musculus (Mouse) protein is Kallikrein 1-related peptidase b16 (Klk1b16).